We begin with the raw amino-acid sequence, 265 residues long: UPF0354 protein GTNG_2723 (265 aa).

It belongs to the UPF0354 family.

The chain is UPF0354 protein GTNG_2723 from Geobacillus thermodenitrificans (strain NG80-2).